We begin with the raw amino-acid sequence, 422 residues long: Beta-1,3-galactosyltransferase 2 (422 aa).

The Cytoplasmic segment spans residues 1-24; the sequence is MLQWRRRHCCFAKMTWNAKRSLFR. A helical; Signal-anchor for type II membrane protein transmembrane segment spans residues 25 to 45; it reads THLIGVLSLVFLFAMFLFFNH. At 46 to 422 the chain is on the lumenal side; sequence HDWLPGRAGF…AGRYRHRKLH (377 aa). N-linked (GlcNAc...) asparagine glycans are attached at residues N75, N100, N119, N176, and N226. The interval 90-110 is disordered; it reads TLRPQTATNSNNTDLSPQGVT.

It belongs to the glycosyltransferase 31 family. Requires Mn(2+) as cofactor. Detected in heart and brain.

The protein localises to the golgi apparatus membrane. It carries out the reaction an N-acetyl-beta-D-glucosaminyl derivative + UDP-alpha-D-galactose = a beta-D-galactosyl-(1-&gt;3)-N-acetyl-beta-D-glucosaminyl derivative + UDP + H(+). The enzyme catalyses a beta-D-GlcNAc-(1-&gt;3)-beta-D-Gal-(1-&gt;4)-beta-D-Glc-(1&lt;-&gt;1)-Cer(d18:1(4E)) + UDP-alpha-D-galactose = a beta-D-Gal-(1-&gt;3)-beta-D-GlcNAc-(1-&gt;3)-beta-D-Gal-(1-&gt;4)-beta-D-Glc-(1&lt;-&gt;1')-Cer(d18:1(4E)) + UDP + H(+). The catalysed reaction is a neolactoside IV(3)-beta-GlcNAc-nLc4Cer(d18:1(4E)) + UDP-alpha-D-galactose = a neolactoside IV(3)-beta-[Gal-beta-(1-&gt;3)-GlcNAc]-nLc4Cer(d18:1(4E)) + UDP + H(+). The protein operates within protein modification; protein glycosylation. Functionally, beta-1,3-galactosyltransferase that transfers galactose from UDP-galactose to substrates with a terminal beta-N-acetylglucosamine (beta-GlcNAc) residue. Can also utilize substrates with a terminal galactose residue, albeit with lower efficiency. Involved in the biosynthesis of the carbohydrate moieties of glycolipids and glycoproteins. Inactive towards substrates with terminal alpha-N-acetylglucosamine (alpha-GlcNAc) or alpha-N-acetylgalactosamine (alpha-GalNAc) residues. This chain is Beta-1,3-galactosyltransferase 2, found in Homo sapiens (Human).